A 278-amino-acid polypeptide reads, in one-letter code: MAEMRPGPLVGKQLNELPDHSPLLQPGLAELRRRVQEAGVPQTPQPLTDAFLLRFLRARDFDLDLAWRLMKNYYKWRAECPELSADLRPRSILGLLKAGYHGVLRSRDSTGSRVLIYRIAYWDPKVFTAYDVFRVSLITSELIVQEVETQRNGVKAIFDLEGWQVSHAFQITPSVAKKIAAVLTDSFPLKVRGIHLINEPVIFHAVFSMIKPFLTEKIKDRIHLHGNNYKSSMLQHFPDILPREYGGKEFSMEDICQEWTNFIMKSEDYLSSISETIQ.

Residues 88 to 253 enclose the CRAL-TRIO domain; that stretch reads RPRSILGLLK…EYGGKEFSME (166 aa). D185 lines the a 1,2-diacyl-sn-glycero-3-phospho-(1D-myo-inositol-3,4-bisphosphate) pocket. F187 contributes to the (+)-alpha-tocopherol binding site. 190-192 contributes to the a 1,2-diacyl-sn-glycero-3-phospho-(1D-myo-inositol-3,4-bisphosphate) binding site; that stretch reads KVR. Residue 208-211 coordinates a 1,2-diacyl-sn-glycero-3-phospho-(1D-myo-inositol-4,5-bisphosphate); sequence SMIK. K217 and R221 together coordinate a 1,2-diacyl-sn-glycero-3-phospho-(1D-myo-inositol-3,4-bisphosphate).

Monomer and homotetramer. Phosphatidylinositol 4,5-bisphosphate binding induces the formation of homotetramers. Phosphatidylinositol 3,4-bisphosphate is less efficient in inducing tetramerization.

The protein resides in the cytoplasm. In terms of biological role, binds (+)-alpha-tocopherol, enhances its transfer between separate membranes, and stimulates its release from liver cells. Binds both phosphatidylinositol 3,4-bisphosphate and phosphatidylinositol 4,5-bisphosphate; the resulting conformation change is important for the release of the bound alpha-tocopherol. In Mus musculus (Mouse), this protein is Alpha-tocopherol transfer protein (Ttpa).